Consider the following 218-residue polypeptide: UPF0758 protein SAUSA300_1608 (218 aa).

The 123-residue stretch at 92-214 (KITQPSDVAD…FTSLVEAGYF (123 aa)) folds into the MPN domain. Zn(2+) contacts are provided by histidine 163, histidine 165, and aspartate 176. The short motif at 163 to 176 (HNHPSGDVTPSQED) is the JAMM motif element.

It belongs to the UPF0758 family.

This is UPF0758 protein SAUSA300_1608 from Staphylococcus aureus (strain USA300).